Reading from the N-terminus, the 389-residue chain is Glutamate 5-kinase (389 aa).

Lys16 provides a ligand contact to ATP. Substrate contacts are provided by Ser56, Asp143, and Asn155. 175 to 176 contacts ATP; that stretch reads SD. The PUA domain maps to 281–358; the sequence is AGGLHVDDGA…AEIEAILGYP (78 aa).

It belongs to the glutamate 5-kinase family.

Its subcellular location is the cytoplasm. The enzyme catalyses L-glutamate + ATP = L-glutamyl 5-phosphate + ADP. It functions in the pathway amino-acid biosynthesis; L-proline biosynthesis; L-glutamate 5-semialdehyde from L-glutamate: step 1/2. Its function is as follows. Catalyzes the transfer of a phosphate group to glutamate to form L-glutamate 5-phosphate. This Rhizobium leguminosarum bv. trifolii (strain WSM2304) protein is Glutamate 5-kinase.